The following is a 385-amino-acid chain: MELQEVLHMNGGEGEASYAKNSSFNQLALAKVKPFLEQCIRELLRANLPNINKCIKVADLGCASGPNTLLTVRDTVQSIDKVRQEMKNELERPTIQVFLTDLFQNDFNSVFMLLPSFYRKLEKENGRKIGSCLIAAMPGSFHGRLFPEESMHFLHSSYSLQFLSQVPSGLVTELGITANKRSIYSSKASPPPVQKAYLDQFTKDFTTFLRMRSEELLSRGRMLLTCICKGDECDGPNTMDLLEMAINDLVVEGRLGEEKLDSFNVPIYTASVEEVKCMVEEEGSFEILYLQTFKLRYDAGFSIDDDCQVRSHSPEYSDEHARAAHVASLIRSVYEPILASHFGEAIIPDIFHRFATNAAKVIRLGKGFYNNLIISLAKKPEKSDV.

Positions 18, 62, 67, 101, 102, 140, and 141 each coordinate S-adenosyl-L-homocysteine. Caffeine-binding residues include Tyr158, Gln161, and Phe162. Mg(2+) is bound at residue Asn179. Thr238 provides a ligand contact to caffeine. Residues Asp261, Phe263, and Asn264 each coordinate Mg(2+). Tyr369 provides a ligand contact to caffeine.

The protein belongs to the methyltransferase superfamily. Type-7 methyltransferase family. Mg(2+) serves as cofactor.

It functions in the pathway alkaloid biosynthesis. Its function is as follows. May be involved in the biosynthesis of caffeine. The polypeptide is Probable caffeine synthase MTL1 (Coffea canephora (Robusta coffee)).